The chain runs to 490 residues: Betaine aldehyde dehydrogenase (490 aa).

Isoleucine 27 and aspartate 93 together coordinate K(+). Residue 150-152 (GAW) participates in NAD(+) binding. Residue lysine 162 is the Charge relay system of the active site. Position 176–179 (176–179 (KPSE)) interacts with NAD(+). Valine 180 serves as a coordination point for K(+). 230 to 233 (GTDT) is a binding site for NAD(+). Leucine 246 is a K(+) binding site. The active-site Proton acceptor is the glutamate 252. Residues glycine 254, cysteine 286, and glutamate 387 each coordinate NAD(+). Cysteine 286 serves as the catalytic Nucleophile. Cysteine 286 bears the Cysteine sulfenic acid (-SOH) mark. K(+)-binding residues include lysine 457 and glycine 460. Glutamate 464 acts as the Charge relay system in catalysis.

It belongs to the aldehyde dehydrogenase family. Dimer of dimers. K(+) serves as cofactor.

It carries out the reaction betaine aldehyde + NAD(+) + H2O = glycine betaine + NADH + 2 H(+). It participates in amine and polyamine biosynthesis; betaine biosynthesis via choline pathway; betaine from betaine aldehyde: step 1/1. In terms of biological role, involved in the biosynthesis of the osmoprotectant glycine betaine. Catalyzes the irreversible oxidation of betaine aldehyde to the corresponding acid. This Pseudomonas syringae pv. syringae (strain B728a) protein is Betaine aldehyde dehydrogenase.